A 960-amino-acid chain; its full sequence is MYRAGALVLRSATLRRTRFLAAHQNFATISSQRSSVLLAKSLESSIGGAGNQKKFYSSKDHDDPIAVDDSLELYKDLGGMSPIQVPADMPNVPILAINRYPLFPGFIKKVDIVKDDNLKALIRRQLSLKQPYAGVFVKKDDENKEETIVSLSEVYPTGSFVQIIEVRDQGSVLELVLSAHRRIRVIEPIEDVVAPKTDTPLNGRRARGKRAGLPPTPPPTPPLSTPTSAPEASATSPEEKEEKKDPERKGIVMVRTENVVADPVPKNNETKATMMAIVQTIRDVVQFNQLFGQQINLLLHPSQNVIDNPVYLCDLVATLVQSAETKDLQEMMDETDVSKRLKIALLLIQKEKAVAKLKHDINKDVEKKVQDHHRKYLLNEQLKVIKKELGIEKDEKTTIIEKIDERMKTLAVPEYALKVINEEKTKLQFLDPHSSEFSVTRNYLEWLTSVPWGLTSPENRRLSHAKKALDEGHYGMKDVKERIMEFIAVNLLRKSVGGKILCFHGPPGVGKTSIAKSIANALNREYFRFSVGGMTDVAEIKGHRRTYVGAMPGKMIQCMKKVKTENPLVLIDEVDKIGGAGFHGDPASALLELLDPEQNANFNDHFLDVPVDLSRVLFICTANEISKIPGPLRDRMEMIDVSGYLAEEKVAIAHQHLIPQLRKETSLSADQLNIEDSALEELIKHYCRESGVRNLQQHIERIFRKAALQIAEQQPEDEQPAATTAISENSDAEPVSTPSDPPTFTPEKINISTENLQKFVGRPKFTSDRMYEVTPPGVIMGLAWTAMGGSALYIETVLKRPVDVTSDKDGSIETTGNLGDVMKESVRTALTVSKGILAREQPDNKFFDKSHIHIHVPEGATPKDGPSAGVTLVSSLLSLALNRPVVQDMAMTGEISLTGKVLPVGGIREKIIAARRVGAKRVFLPAENRRDFDDLPEFMKSELDIRFVSHYDELYEHLFQ.

Residues 1–56 (MYRAGALVLRSATLRRTRFLAAHQNFATISSQRSSVLLAKSLESSIGGAGNQKKFY) constitute a mitochondrion transit peptide. Residues 92 to 352 (VPILAINRYP…IALLLIQKEK (261 aa)) enclose the Lon N-terminal domain. The segment at 195–250 (PKTDTPLNGRRARGKRAGLPPTPPPTPPLSTPTSAPEASATSPEEKEEKKDPERKG) is disordered. Over residues 214 to 224 (PPTPPPTPPLS) the composition is skewed to pro residues. The span at 225-236 (TPTSAPEASATS) shows a compositional bias: low complexity. Residues 237-250 (PEEKEEKKDPERKG) are compositionally biased toward basic and acidic residues. An ATP-binding site is contributed by 505–512 (GPPGVGKT). A disordered region spans residues 712-748 (EQQPEDEQPAATTAISENSDAEPVSTPSDPPTFTPEK). Positions 773 to 960 (VTPPGVIMGL…YDELYEHLFQ (188 aa)) constitute a Lon proteolytic domain. Active-site residues include S867 and K910.

Belongs to the peptidase S16 family. As to quaternary structure, homohexamer or homoheptamer. Organized in a ring with a central cavity.

It localises to the mitochondrion matrix. It catalyses the reaction Hydrolysis of proteins in presence of ATP.. ATP-dependent serine protease that mediates the selective degradation of misfolded, unassembled or oxidatively damaged polypeptides as well as certain short-lived regulatory proteins in the mitochondrial matrix. May also have a chaperone function in the assembly of inner membrane protein complexes. Participates in the regulation of mitochondrial gene expression and in the maintenance of the integrity of the mitochondrial genome. Binds to mitochondrial DNA in a site-specific manner. The chain is Lon protease homolog, mitochondrial from Caenorhabditis briggsae.